Here is an 89-residue protein sequence, read N- to C-terminus: N.vectensis toxin 7 (89 aa).

A signal peptide spans 1–21; it reads MASFFKIAVICLVMLVVCSNA. 3 disulfides stabilise this stretch: C44-C77, C46-C69, and C62-C78.

In terms of tissue distribution, expressed in ectodermal gland cells.

Its function is as follows. Probable toxin. The protein is N.vectensis toxin 7 of Nematostella vectensis (Starlet sea anemone).